Reading from the N-terminus, the 239-residue chain is Probable 2-phosphosulfolactate phosphatase (239 aa).

Belongs to the ComB family. Mg(2+) serves as cofactor.

The enzyme catalyses (2R)-O-phospho-3-sulfolactate + H2O = (2R)-3-sulfolactate + phosphate. The chain is Probable 2-phosphosulfolactate phosphatase from Clostridium botulinum (strain Okra / Type B1).